Reading from the N-terminus, the 162-residue chain is Phosphopantetheine adenylyltransferase (162 aa).

T10 lines the substrate pocket. ATP is bound by residues 10–11 (TF) and H18. 3 residues coordinate substrate: K42, L74, and R88. ATP-binding positions include 89-91 (GLR), E99, and 124-130 (FSCISST).

Belongs to the bacterial CoaD family. In terms of assembly, homohexamer. It depends on Mg(2+) as a cofactor.

It localises to the cytoplasm. It catalyses the reaction (R)-4'-phosphopantetheine + ATP + H(+) = 3'-dephospho-CoA + diphosphate. The protein operates within cofactor biosynthesis; coenzyme A biosynthesis; CoA from (R)-pantothenate: step 4/5. Functionally, reversibly transfers an adenylyl group from ATP to 4'-phosphopantetheine, yielding dephospho-CoA (dPCoA) and pyrophosphate. This is Phosphopantetheine adenylyltransferase from Francisella tularensis subsp. mediasiatica (strain FSC147).